Reading from the N-terminus, the 92-residue chain is Putative membrane protein insertion efficiency factor (92 aa).

This sequence belongs to the UPF0161 family.

It localises to the cell inner membrane. Could be involved in insertion of integral membrane proteins into the membrane. This chain is Putative membrane protein insertion efficiency factor, found in Synechococcus sp. (strain CC9902).